Here is a 156-residue protein sequence, read N- to C-terminus: Small ribosomal subunit protein uS7 (156 aa).

It belongs to the universal ribosomal protein uS7 family. In terms of assembly, part of the 30S ribosomal subunit. Contacts proteins S9 and S11.

In terms of biological role, one of the primary rRNA binding proteins, it binds directly to 16S rRNA where it nucleates assembly of the head domain of the 30S subunit. Is located at the subunit interface close to the decoding center, probably blocks exit of the E-site tRNA. This chain is Small ribosomal subunit protein uS7, found in Azoarcus sp. (strain BH72).